The following is a 328-amino-acid chain: Cell division protein ZipA (328 aa).

Residues Met-1–Asn-4 are Periplasmic-facing. A helical transmembrane segment spans residues Thr-5 to Ser-25. Over Asn-26–Val-328 the chain is Cytoplasmic. The interval Ser-44–Leu-82 is disordered. The segment covering Gln-57–Lys-81 has biased composition (polar residues).

This sequence belongs to the ZipA family. As to quaternary structure, interacts with FtsZ via their C-terminal domains.

The protein resides in the cell inner membrane. Functionally, essential cell division protein that stabilizes the FtsZ protofilaments by cross-linking them and that serves as a cytoplasmic membrane anchor for the Z ring. Also required for the recruitment to the septal ring of downstream cell division proteins. This chain is Cell division protein ZipA, found in Haemophilus influenzae (strain PittGG).